A 104-amino-acid chain; its full sequence is 10 kDa heat shock protein, mitochondrial (104 aa).

S81 bears the Phosphoserine mark.

Belongs to the GroES chaperonin family. As to quaternary structure, homohexamer.

It localises to the mitochondrion matrix. Functionally, eukaryotic CPN10 homolog which is essential for mitochondrial protein biogenesis, together with CPN60. Binds to CPN60 in the presence of Mg-ATP and suppresses the ATPase activity of the latter. This chain is 10 kDa heat shock protein, mitochondrial (hsp10), found in Schizosaccharomyces pombe (strain 972 / ATCC 24843) (Fission yeast).